Here is a 1400-residue protein sequence, read N- to C-terminus: MNQEVMNLFNPQAPAQTFDSIRISIASPEKILSWSYGEIKKPETINYRTFKPERDGLFCARIFGPIKDYECLCGKYKRMKYKGIICEKCGVEVTLSRVRRERMGHIELAAPVAHIWFLKSLPSRIGTLLDMTLKDIERILYFENYIVTEPGLTSLKEHQLLSEEEYMIAVDEFGEDQFTALIGAEAIYELLASMELEKIAADLRVDLAETTSDLKQKKLMKRLKIVENFLESGNRPEWMIMKIVPVIPPDLRPLVPLDGGRFATSDLNDLYRRVINRNNRLKRLIELRAPGIIIRNEKRMLQEAVDALFDNGRRGRVITGANKRPLKSLSDMLKGKQGRFRQNLLGKRVDYSGRSVIVTGPELKLHQCGLPKKMALELFKPFIYARLDAKGYSSTVKQAKKLVEKERPEVWDILDEVIREHPVLLNRAPTLHRLGIQAFEPTLIEGKAIQLHPLVCTAFNADFDGDQMAVHVPLSLEAQLEARVLMMSTNNILHPANGAPIIVPSQDMVLGLYYLSIVAEKEPGEGMIFADMGELQHALENKVVTLHTKIKGRFKTVDAEGNPVLKIYDTTPGRMIMGELLPKNVNVPFDICNQEMTKKNISKMIDHVYRHCGQKETVIFCDRIMQLGFAHACRAGISFGKDDMVIPESKAKIVAETEALTTEYEQQYNDGLITQGEKYNKVVDAWGKATDKITEEMMARLKAVEFDPVTGRQKQMNSVYMMSHSGARGSVNQMRQLGGMRGLMAKPSGEIIETPIISNFKEGLTVNEYFNSTHGARKGLADTALKTANSGYLTRRLVDVAQDAIISEVDCGAEIGLTMQPIVDAGQIVASIGQRVLGRTALDPILHPVTGEVIVEAGRMIEEKDVEIIEKAGIQSIRIRSALTCETRNGVCAKCYGRDLARGTPVNQGEAVGVIAAQSIGEPGTQLTMRTFHLGGTAQVVDSSYLEASYEGTVKLRNRNVVRNSDGNLVVMGRNMAVLILDATGKERAVHRVTYGSRLFVDEGDTVKRGQRIAEWDPYTRPIMTEVEGYVEFEDLVDGLSVSETADESTGITKRVVIDWRSTPRGSDLKPAMVIKDKAGKILKLSKGGDARFLLSVESILSVEPGAHVKAGDVIARLPMESAKTKDITGGLPRVAELFEARRPKDHAIIAEIDGTVRFGRDYKNKRRIIIEPNDDTIEPVEYLIPKGKPFHLQDGDVIEKGEYILDGNPAPHDILAIKGVEALASYLVNEIQEVYRLQGVLINDKHIEVIVRQMLQKVEITESGDTGYIPGDHVDRIELEEINERLIEEGKKPGSGNPVLLGITKASLQTPSFISAASFQETTRVLTEAAVAGKMDTLQGLKENVIVGRLIPAGTGGMTNQIRRIATARDELIIDERRKTSGSAEANAMLVDMTNNAAE.

Residues cysteine 71, cysteine 73, cysteine 86, and cysteine 89 each contribute to the Zn(2+) site. 3 residues coordinate Mg(2+): aspartate 462, aspartate 464, and aspartate 466. Positions 811, 885, 892, and 895 each coordinate Zn(2+).

This sequence belongs to the RNA polymerase beta' chain family. In terms of assembly, the RNAP catalytic core consists of 2 alpha, 1 beta, 1 beta' and 1 omega subunit. When a sigma factor is associated with the core the holoenzyme is formed, which can initiate transcription. It depends on Mg(2+) as a cofactor. Requires Zn(2+) as cofactor.

The enzyme catalyses RNA(n) + a ribonucleoside 5'-triphosphate = RNA(n+1) + diphosphate. Functionally, DNA-dependent RNA polymerase catalyzes the transcription of DNA into RNA using the four ribonucleoside triphosphates as substrates. The chain is DNA-directed RNA polymerase subunit beta' from Brucella abortus (strain S19).